Here is a 1828-residue protein sequence, read N- to C-terminus: InaD-like protein (1828 aa).

An L27 domain is found at 5-65 (PAPDKLQVLQ…SIKQLKGQLS (61 aa)). 3 PDZ domains span residues 134-221 (YIDI…AREP), 248-328 (DVEL…ARDP), and 365-453 (GVEL…VRRK). A phosphoserine mark is found at Ser459 and Ser522. Residues 553-639 (DAELQKYSKL…PFTLVCCRRL (87 aa)) enclose the PDZ 4 domain. A Phosphoserine modification is found at Ser645. 2 PDZ domains span residues 686–758 (IVEL…EVLK) and 1070–1162 (IVEI…QSLS). Residues 1168–1220 (IPSVHNKANKIANNQDQNTEEKKEKRQGTPPPPMKLPPPYKAPSDDSDENEEE) form a disordered region. Over residues 1196-1208 (TPPPPMKLPPPYK) the composition is skewed to pro residues. Ser1211 is subject to Phosphoserine. Positions 1241-1324 (IIELEKDKNG…KVKLVFIRNE (84 aa)) constitute a PDZ 7 domain. Residues 1333–1362 (APFPVPSSSPSSLEDQSGTEPVSSEEDGSL) form a disordered region. Residues 1345-1354 (LEDQSGTEPV) show a composition bias toward polar residues. 2 PDZ domains span residues 1464–1547 (IIEI…YRDE) and 1560–1642 (PVDL…GRLR). Thr1535 is modified (phosphothreonine). The span at 1645–1668 (SWTSSRKTSQNSQGSQHSTHSSFH) shows a compositional bias: polar residues. Positions 1645–1669 (SWTSSRKTSQNSQGSQHSTHSSFHP) are disordered. One can recognise a PDZ 10 domain in the interval 1703 to 1789 (TVEIIRELSD…RIILQVVADT (87 aa)). The tract at residues 1805-1828 (YHLGSPTAEHHPEDTEEPLQMTAG) is disordered.

As to quaternary structure, forms a ternary complex with PALS1 and CRB1. Component of a complex whose core is composed of ARHGAP17, AMOT, PALS1, INADL/PATJ and PARD3/PAR3. Forms a heterotrimeric complex composed of MMP5, LIN7B and PATJ; the N-terminal L27 domain of PALS1 interacts with the L27 domain of PATJ and the C-terminal L27 domain of PALS1 interacts with the L27 domain of LIN7B. Component of a complex composed of CRB3, PALS1 and PATJ. As part of the Crumbs complex; interacts with WWP1, the interaction is enhanced by AMOTL2 and facilitates WWP1 localization to the plasma membrane. The Crumbs complex promotes monoubiquitination of AMOTL2 by WWP1, which activates the Hippo signaling pathway. Interacts (via N-terminus) with PALS1/PALS (via PDZ domain). Interacts with TJP3/ZO-3 and CLDN1/claudin-1. Interacts with ASIC3, KCNJ10, KCNJ15, GRIN2A, GRIN2B, GRIN2C, GRIN2D, NLGN2, and HTR2A. Interacts with MPP7. Directly interacts with HTR4. Interacts (via PDZ domain 8) with WWC1 (via the ADDV motif). Interacts with SLC6A4. Interacts (via C-terminus) with ARHGEF18. Interacts with NPHP1. Interacts with PARD3/PAR3. Interacts (via PDZ1-6 domains) with TJP1/ZO1; the interaction is required for attachment and extension of TJP1/ZO1 condensates along the apical cell interface.

The protein localises to the cell junction. Its subcellular location is the tight junction. It is found in the apical cell membrane. It localises to the cytoplasm. The protein resides in the perinuclear region. Its function is as follows. Scaffolding protein that facilitates the localization of proteins to the cell membrane. Required for the correct formation of tight junctions and epithelial apico-basal polarity. Acts (via its L27 domain) as an apical connector and elongation factor for multistranded TJP1/ZO1 condensates that form a tight junction belt, thereby required for the formation of the tight junction-mediated cell barrier. Positively regulates epithelial cell microtubule elongation and cell migration, possibly via facilitating localization of PRKCI/aPKC and PAR3D/PAR3 at the leading edge of migrating cells. Plays a role in the correct reorientation of the microtubule-organizing center during epithelial migration. May regulate the surface expression and/or function of ASIC3 in sensory neurons. May recruit ARHGEF18 to apical cell-cell boundaries. The chain is InaD-like protein from Canis lupus familiaris (Dog).